A 185-amino-acid polypeptide reads, in one-letter code: Ovomucoid (185 aa).

3 consecutive Kazal-like domains span residues 1–63 (VEVD…ECRE), 64–128 (AVPM…ECRK), and 131–185 (AAVS…FGKC). 9 disulfides stabilise this stretch: cysteine 5/cysteine 43, cysteine 22/cysteine 40, cysteine 30/cysteine 61, cysteine 69/cysteine 108, cysteine 86/cysteine 105, cysteine 94/cysteine 126, cysteine 137/cysteine 167, cysteine 145/cysteine 164, and cysteine 153/cysteine 185. Asparagine 174 carries N-linked (GlcNAc...) asparagine glycosylation.

The protein resides in the secreted. In Meleagris gallopavo (Wild turkey), this protein is Ovomucoid.